We begin with the raw amino-acid sequence, 88 residues long: MAKEELIEMQGSVTEVLPDSRFRVTLDNGHQLIAYTGGKMRKHHIRILAGDKVSLEMSPYDLTKGRITFRHLAGRGPGPGTGSSSGNR.

Residues 1-72 form the S1-like domain; sequence MAKEELIEMQ…TKGRITFRHL (72 aa).

It belongs to the IF-1 family. Component of the 30S ribosomal translation pre-initiation complex which assembles on the 30S ribosome in the order IF-2 and IF-3, IF-1 and N-formylmethionyl-tRNA(fMet); mRNA recruitment can occur at any time during PIC assembly.

It localises to the cytoplasm. One of the essential components for the initiation of protein synthesis. Stabilizes the binding of IF-2 and IF-3 on the 30S subunit to which N-formylmethionyl-tRNA(fMet) subsequently binds. Helps modulate mRNA selection, yielding the 30S pre-initiation complex (PIC). Upon addition of the 50S ribosomal subunit IF-1, IF-2 and IF-3 are released leaving the mature 70S translation initiation complex. This Acidovorax sp. (strain JS42) protein is Translation initiation factor IF-1 2.